A 262-amino-acid chain; its full sequence is Acyl-[acyl-carrier-protein]--UDP-N-acetylglucosamine O-acyltransferase (262 aa).

This sequence belongs to the transferase hexapeptide repeat family. LpxA subfamily. As to quaternary structure, homotrimer.

It localises to the cytoplasm. The enzyme catalyses a (3R)-hydroxyacyl-[ACP] + UDP-N-acetyl-alpha-D-glucosamine = a UDP-3-O-[(3R)-3-hydroxyacyl]-N-acetyl-alpha-D-glucosamine + holo-[ACP]. Its pathway is glycolipid biosynthesis; lipid IV(A) biosynthesis; lipid IV(A) from (3R)-3-hydroxytetradecanoyl-[acyl-carrier-protein] and UDP-N-acetyl-alpha-D-glucosamine: step 1/6. Its function is as follows. Involved in the biosynthesis of lipid A, a phosphorylated glycolipid that anchors the lipopolysaccharide to the outer membrane of the cell. The sequence is that of Acyl-[acyl-carrier-protein]--UDP-N-acetylglucosamine O-acyltransferase from Haemophilus influenzae (strain ATCC 51907 / DSM 11121 / KW20 / Rd).